Consider the following 625-residue polypeptide: Vacuolar-sorting receptor 7 (625 aa).

A signal peptide spans 1–26; that stretch reads MGLVNGRASLTFLLAALTIIAMVVEA. Residues 27–564 are Lumenal-facing; the sequence is RFVVEKESIS…CIERYGSKTA (538 aa). One can recognise a PA domain in the interval 58–166; sequence DYGGFLIGSV…SFGDDLRQGF (109 aa). N-linked (GlcNAc...) asparagine glycans are attached at residues Asn-292, Asn-400, and Asn-432. EGF-like domains lie at 414 to 464 and 467 to 513; these read ETNE…TSCT and GPAR…LTCE. 7 disulfide bridges follow: Cys-418/Cys-436, Cys-425/Cys-445, Cys-447/Cys-463, Cys-471/Cys-491, Cys-478/Cys-499, Cys-501/Cys-512, and Cys-542/Cys-555. One can recognise an EGF-like 3; calcium-binding domain in the interval 514-556; the sequence is DINECKERSVCQCSGCRCKNSWGGYKCSCSGDRLYINDQDTCI. The chain crosses the membrane as a helical span at residues 565 to 585; that stretch reads WWLTFLILAIVAVAGLAGYIF. The Cytoplasmic segment spans residues 586–625; that stretch reads YKYRFRSYMDSEIMTIMSQYMPLESQRAREVPSEAEPFTL. A Tyrosine-based internalization motif motif is present at residues 605 to 608; the sequence is YMPL.

Belongs to the VSR (BP-80) family. Expressed at low levels in seedlings, roots, young leaves, flowers and siliques.

It localises to the golgi apparatus membrane. In terms of biological role, vacuolar-sorting receptor (VSR) involved in clathrin-coated vesicles sorting from Golgi apparatus to vacuoles. The chain is Vacuolar-sorting receptor 7 (VSR7) from Arabidopsis thaliana (Mouse-ear cress).